Here is a 1490-residue protein sequence, read N- to C-terminus: Leucine-rich repeat-containing protein 7 (1490 aa).

LRR repeat units follow at residues 23-44, 47-68, 70-91, 93-114, 116-137, 139-161, 162-183, 185-206, 208-229, 231-253, 254-275, 277-298, 300-321, 323-344, 346-367, 369-391, and 392-413; these read IISVLDYSHCSLQQVPKEVFNF, TLEELYLDANQIEELPKQLFNC, ALRKLSIPDNDLSSLPTSIASL, NLKELDISKNGVQEFPENIKCC, CLTIIEASVNPISKLPDGFTQL, NLTQLYLNDAFLEFLPANFGRLV, KLRILELRENHLKTLPKSMHKL, QLERLDLGNNEFSELPEVLDQI, NLRELWMDNNALQVLPGSIGKL, MLVYLDMSKNRIETVDMDISGCE, ALEDLLLSSNMLQQLPDSIGLL, KLTTLKVDDNQLTMLPNTIGNL, LLEEFDCSCNELESLPPTIGYL, SLRTLAVDENFLPELPREIGSC, NVTVMSLRSNKLEFLPEEIGQM, RLRVLNLSDNRLKNLPFSFTKLK, and ELAALWLSDNQSKALIPLQTEA. Residues serine 439, serine 441, and serine 443 each carry the phosphoserine modification. Residues 663–676 are compositionally biased toward basic and acidic residues; sequence KKESTDESEVDKTH. 3 disordered regions span residues 663 to 709, 775 to 808, and 822 to 899; these read KKES…VGSL, DNTGFVSEEATGENANNNPLLSSKARSVPAHGRR, and ELEQ…YHDP. A compositionally biased stretch (polar residues) spans 677-686; it reads CLNNSVSSGT. A compositionally biased stretch (low complexity) spans 687–700; it reads YSDYSPSQASSASS. The span at 787–799 shows a compositional bias: polar residues; it reads ENANNNPLLSSKA. Phosphothreonine is present on threonine 831. Serine 850 bears the Phosphoserine mark. Residues 859–871 are compositionally biased toward low complexity; the sequence is PSKLETTPTTSPL. Threonine 865 bears the Phosphothreonine mark. The residue at position 869 (serine 869) is a Phosphoserine. A compositionally biased stretch (basic and acidic residues) spans 872–882; that stretch reads PERKDHMKEPT. Serine 947, serine 949, and serine 1118 each carry phosphoserine. Arginine 1149 is modified (omega-N-methylarginine). Polar residues predominate over residues 1194–1217; the sequence is LTQRRPLSARSYSTESYGASQTRP. The interval 1194 to 1218 is disordered; it reads LTQRRPLSARSYSTESYGASQTRPV. Serine 1233 bears the Phosphoserine mark. Disordered stretches follow at residues 1238-1265 and 1282-1312; these read GNYGDKTSDNSDIKTRPTPVKGEESCGK and RLDRTPSQQSNILDNGQEDVSPSGQWNPYPL. Residues 1243 to 1263 are compositionally biased toward basic and acidic residues; sequence KTSDNSDIKTRPTPVKGEESC. Residues 1286–1307 show a composition bias toward polar residues; that stretch reads TPSQQSNILDNGQEDVSPSGQW. 2 positions are modified to phosphoserine: serine 1288 and serine 1392. One can recognise a PDZ domain in the interval 1398-1488; it reads EQFCVRIEKN…TVDLVIQREL (91 aa).

This sequence belongs to the LAP (LRR and PDZ) protein family. As to quaternary structure, interacts with CNKSR2 and DLG4. Interacts with CTNND2/Catenin delta-2. Forms a complex with N-cadherin through CTNND2. Interacts with CAMK2A. In terms of processing, O-glycosylated and phosphorylated. As to expression, brain-specific. Highly concentrated at synapses.

The protein localises to the cytoplasm. It localises to the postsynaptic density. Functionally, required for normal synaptic spine architecture and function. Necessary for DISC1 and GRM5 localization to postsynaptic density complexes and for both N-methyl D-aspartate receptor-dependent and metabotropic glutamate receptor-dependent long term depression. The sequence is that of Leucine-rich repeat-containing protein 7 (Lrrc7) from Rattus norvegicus (Rat).